We begin with the raw amino-acid sequence, 208 residues long: Large ribosomal subunit protein uL4 (208 aa).

Residues 46 to 97 (QGTHKTKTRAEVRGGGKKPYRQKGTGNARQGSSRSPIMVGGGTIFGPQPRSY) are disordered. The span at 69-80 (GTGNARQGSSRS) shows a compositional bias: polar residues.

Belongs to the universal ribosomal protein uL4 family. As to quaternary structure, part of the 50S ribosomal subunit.

Its function is as follows. One of the primary rRNA binding proteins, this protein initially binds near the 5'-end of the 23S rRNA. It is important during the early stages of 50S assembly. It makes multiple contacts with different domains of the 23S rRNA in the assembled 50S subunit and ribosome. Forms part of the polypeptide exit tunnel. The protein is Large ribosomal subunit protein uL4 of Chlorobaculum parvum (strain DSM 263 / NCIMB 8327) (Chlorobium vibrioforme subsp. thiosulfatophilum).